The sequence spans 358 residues: uncharacterized protein (358 aa).

ATP is bound at residue 207 to 214 (AAVKDGKT).

This is an uncharacterized protein from Bacillus subtilis (strain 168).